The primary structure comprises 320 residues: GMP reductase (320 aa).

C174 acts as the Thioimidate intermediate in catalysis. 203 to 226 lines the NADP(+) pocket; that stretch reads IIADGGLRVNGDIAKSIRFGATMC.

The protein belongs to the IMPDH/GMPR family. GuaC type 2 subfamily.

It carries out the reaction IMP + NH4(+) + NADP(+) = GMP + NADPH + 2 H(+). In terms of biological role, catalyzes the irreversible NADPH-dependent deamination of GMP to IMP. It functions in the conversion of nucleobase, nucleoside and nucleotide derivatives of G to A nucleotides, and in maintaining the intracellular balance of A and G nucleotides. The polypeptide is GMP reductase (Mesoplasma florum (strain ATCC 33453 / NBRC 100688 / NCTC 11704 / L1) (Acholeplasma florum)).